The following is a 135-amino-acid chain: Histone H3 type 1 (135 aa).

The tract at residues 1–40 (MARTKQTARKSTGGKAPRKQLATKAARKTPATGGVKKPHR) is disordered. The residue at position 5 (Lys-5) is an N6-methyllysine. An N6-acetyllysine; alternate modification is found at Lys-10. An N6-methyllysine; alternate modification is found at Lys-10. Ser-11 carries the phosphoserine modification. Residue Thr-12 is modified to Phosphothreonine. 3 positions are modified to N6-acetyllysine: Lys-15, Lys-19, and Lys-24. At Lys-28 the chain carries N6-acetyllysine; alternate. At Lys-28 the chain carries N6-methyllysine; alternate. 2 positions are modified to N6-methyllysine: Lys-36 and Lys-37.

It belongs to the histone H3 family. In terms of assembly, the nucleosome is a histone octamer containing two molecules each of H2A, H2B, H3 and H4 assembled in one H3-H4 heterotetramer and two H2A-H2B heterodimers. The octamer wraps approximately 147 bp of DNA. Post-translationally, acetylation is generally linked to gene activation. Acetylated to form H3K9ac (11%), H3K14ac (17%), H3K18ac (11%), H3K23ac (16%) and H3K27ac (7%). H3K4, H3K35 and H3K36 are not acetylated. H3K4me prevents acetylation. 32% of the histone H3 are acetylated with, on average, 2.4 acetyl-Lys. They are all continuously deacatylated and re-acetylated with a half-life of approximately 2 minutes. In terms of processing, monomethylated to form H3K4me1 (81%), H3K9me1 (16%), H3K27me1 (25%), H3K35me1 (25%) and H3K36me1 (5%). No methylation at H3K14, H3K18 and H3K23. Methylated by a protein complex that includes Mut11. Set1 methylates specifically H3K4. H3K4me1 is associated with silenced euchromatin. Set3 forms H3K9me1, while H3K9me2 is undetected. H3K9me1 is specifically associated with silent, multi-copy transgenes. No phosphorylation detected.

The protein resides in the nucleus. The protein localises to the chromosome. Functionally, core component of nucleosome. Nucleosomes wrap and compact DNA into chromatin, limiting DNA accessibility to the cellular machineries which require DNA as a template. Histones thereby play a central role in transcription regulation, DNA repair, DNA replication and chromosomal stability. DNA accessibility is regulated via a complex set of post-translational modifications of histones, also called histone code, and nucleosome remodeling. The polypeptide is Histone H3 type 1 (ch3-I) (Chlamydomonas reinhardtii (Chlamydomonas smithii)).